A 633-amino-acid polypeptide reads, in one-letter code: Putative ankyrin repeat protein L774 (633 aa).

7 ANK repeats span residues 91–120 (IYGH…EYDP), 123–152 (NCDD…FFKI), 221–250 (NVNK…EYDF), 252–275 (TILK…ILDS), 338–367 (DYDV…DVNN), 369–393 (MTYA…TLST), and 517–546 (DNLK…NSND).

The protein is Putative ankyrin repeat protein L774 of Acanthamoeba polyphaga mimivirus (APMV).